A 102-amino-acid polypeptide reads, in one-letter code: Envelope protein US9 (102 aa).

Residues 1–75 (MAGQNTMEGE…KIYHRKKFCY (75 aa)) lie on the Intravirion side of the membrane. The short motif at 14 to 15 (LL) is the Di-leucine internalization motif element. Residues 41–55 (EKCYYSDSENETADE) are acidic. A phosphoserine; by host CK2 mark is found at S46 and S48. The chain crosses the membrane as a helical; Signal-anchor for type II membrane protein span at residues 76 to 96 (ITLIIVFVFAMTGAAFALGYI). Over 97–102 (TSQFVG) the chain is Virion surface.

This sequence belongs to the alphaherpesvirinae envelope protein US9 family. Post-translationally, phosphorylated on serines within the acidic cluster, possibly by host CK2. Phosphorylation determines whether endocytosed viral US9 traffics to the trans-Golgi network or recycles to the cell membrane.

Its subcellular location is the virion membrane. The protein resides in the host Golgi apparatus membrane. It is found in the host Golgi apparatus. It localises to the host trans-Golgi network. The protein localises to the host cell membrane. Functionally, essential for the anterograde spread of the infection throughout the host nervous system. Together with the gE/gI heterodimer, US9 is involved in the sorting and transport of viral structural components toward axon tips. The chain is Envelope protein US9 from Varicella-zoster virus (strain Dumas) (HHV-3).